A 328-amino-acid polypeptide reads, in one-letter code: Hairy/enhancer-of-split related with YRPW motif-like protein (328 aa).

Residues 1-57 (MKRPKEPSGSDGESDGPIDVGQEGQLSQMARPLSTPSSSQMQARKKHRGIIEKRRRD) are disordered. A compositionally biased stretch (polar residues) spans 24-42 (GQLSQMARPLSTPSSSQMQ). Residues 42 to 111 (QARKKHRGII…GGTGFFDARA (70 aa)) form a transcriptional repression and interaction with NCOR1 and SIN3A region. Residues 43–98 (ARKKHRGIIEKRRRDRINSSLSELRRLVPTAFEKQGSSKLEKAEVLQMTVDHLKML) form the bHLH domain. The 38-residue stretch at 116–153 (FRSIGFRECLTEVIRYLGVLEGPSSRADPVRIRLLSHL) folds into the Orange domain. The interval 239 to 308 (SRGASSTRRA…NSSSPGPAGR (70 aa)) is disordered. Over residues 261–270 (APSSRAARSS) the composition is skewed to low complexity.

The protein belongs to the HEY family. In terms of assembly, self-associates. Interacts with GATA4, GATA6, HES1, HEY1 and HEY2. Interacts with HDAC1, NCOR1 and SIN3A.

The protein localises to the nucleus. Downstream effector of Notch signaling which may be required for cardiovascular development. Transcriptional repressor which binds preferentially to the canonical E box sequence 5'-CACGTG-3'. Represses transcription by the cardiac transcriptional activators GATA4 and GATA6. In Homo sapiens (Human), this protein is Hairy/enhancer-of-split related with YRPW motif-like protein (HEYL).